We begin with the raw amino-acid sequence, 205 residues long: Cell wall / vacuolar inhibitor of fructosidase 1 (205 aa).

Positions 1–23 are cleaved as a signal peptide; the sequence is MKMMKVMMLIVMMMMVMVMVSEG. Intrachain disulfides connect Cys30-Cys39 and Cys93-Cys134. Residues Asn139 and Asn156 are each glycosylated (N-linked (GlcNAc...) asparagine).

This sequence belongs to the PMEI family. As to expression, mostly expressed in roots, senescent leaves and flowers (in sepals), and, to a lower extent, in stems, specifically in the vascular tissues (e.g. in the phloem).

It localises to the vacuole. In terms of biological role, inhibits fructosidases from vacuoles (vacuolar invertase VI). In Arabidopsis thaliana (Mouse-ear cress), this protein is Cell wall / vacuolar inhibitor of fructosidase 1 (C/VIF1).